A 504-amino-acid polypeptide reads, in one-letter code: Maturase K (504 aa).

Belongs to the intron maturase 2 family. MatK subfamily.

Its subcellular location is the plastid. It localises to the chloroplast. Its function is as follows. Usually encoded in the trnK tRNA gene intron. Probably assists in splicing its own and other chloroplast group II introns. This Quercus cerris (Turkey oak) protein is Maturase K.